We begin with the raw amino-acid sequence, 43 residues long: uncharacterized protein (43 aa).

This is an uncharacterized protein from Homo sapiens (Human).